A 532-amino-acid chain; its full sequence is Glutamate--cysteine ligase (532 aa).

Belongs to the glutamate--cysteine ligase type 1 family. Type 1 subfamily.

It carries out the reaction L-cysteine + L-glutamate + ATP = gamma-L-glutamyl-L-cysteine + ADP + phosphate + H(+). Its pathway is sulfur metabolism; glutathione biosynthesis; glutathione from L-cysteine and L-glutamate: step 1/2. The protein is Glutamate--cysteine ligase of Pseudomonas fluorescens (strain Pf0-1).